The sequence spans 359 residues: Lipopolysaccharide 1,6-galactosyltransferase (359 aa).

Gln242 and Glu274 together coordinate UDP.

It belongs to the glycosyltransferase group 1 family. Glycosyltransferase 4 subfamily.

The catalysed reaction is alpha-D-Glc-(1-&gt;3)-[L-alpha-D-Hep-(1-&gt;7)]-4-O-PO3(2-)-L-alpha-D-Hep-(1-&gt;3)-4-O-PO3(2-)-L-alpha-D-Hep-(1-&gt;5)-[alpha-Kdo-(2-&gt;4)]-alpha-Kdo-(2-&gt;6)-lipid A + UDP-alpha-D-galactose = alpha-D-Gal-(1-&gt;6)-alpha-D-Glc-(1-&gt;3)-[L-alpha-D-Hep-(1-&gt;7)]-4-O-PO3(2-)-L-alpha-D-Hep-(1-&gt;3)-4-O-PO3(2-)-L-alpha-D-Hep-(1-&gt;5)-[alpha-Kdo-(2-&gt;4)]-alpha-Kdo-(2-&gt;6)-lipid A + UDP + H(+). It participates in bacterial outer membrane biogenesis; LPS core biosynthesis. In terms of biological role, galactosyltransferase involved in the biosynthesis of the core oligosaccharide region of lipopolysaccharide (LPS). Catalyzes the addition of galactose from UDP-galactose to the first glucose residue of the LPS outer core. Cannot use other sugar donors, such as UDP-glucose, UDP-glucuronic acid, UDP-galacuronic acid, GDP-mannose, ADP-glucose and GDP-glucose. In the absence of a lipid acceptor, can hydrolyze UDP-galactose to UDP and galactose. This is Lipopolysaccharide 1,6-galactosyltransferase from Escherichia coli (strain K12).